Reading from the N-terminus, the 546-residue chain is Casein kinase I homolog 2 (546 aa).

Polar residues-rich tracts occupy residues 1–33 (MSQV…SNVR) and 44–55 (HVSSNLNHNTGN). The disordered stretch occupies residues 1–67 (MSQVQSPLTA…ASYSGSQSRD (67 aa)). N-acetylserine is present on Ser2. One can recognise a Protein kinase domain in the interval 76–360 (YKIGKKIGEG…ETADGQYDWM (285 aa)). ATP-binding positions include 82-90 (IGEGSFGVL) and Lys105. The active-site Proton acceptor is Asp195. Disordered stretches follow at residues 373-425 (NKKP…QAQA) and 443-546 (QQAN…LGCC). Low complexity predominate over residues 412 to 425 (QQQQQQQAQAQAQA). The segment covering 453–465 (DDSHYDEEREASK) has biased composition (basic and acidic residues). At Ser455 the chain carries Phosphoserine. A Glycyl lysine isopeptide (Lys-Gly) (interchain with G-Cter in ubiquitin) cross-link involves residue Lys465. Positions 475-496 (QQQTQQKYAQQQQKQMQQKSKQ) are enriched in low complexity. The segment covering 497 to 530 (FANTGANGQTNKYPYNAQPTANDEQNAKNAAQDR) has biased composition (polar residues). Residues 533–546 (NKSSKGFFSKLGCC) show a composition bias toward low complexity. Residues Cys545 and Cys546 are each lipidated (S-palmitoyl cysteine).

This sequence belongs to the protein kinase superfamily. CK1 Ser/Thr protein kinase family. Casein kinase I subfamily. Palmitoylated by AKR1, which is required for proper plasma membrane localization of YCK2.

It localises to the cell membrane. The catalysed reaction is L-seryl-[protein] + ATP = O-phospho-L-seryl-[protein] + ADP + H(+). It carries out the reaction L-threonyl-[protein] + ATP = O-phospho-L-threonyl-[protein] + ADP + H(+). Its function is as follows. Casein kinases are operationally defined by their preferential utilization of acidic proteins such as caseins as substrates. This is Casein kinase I homolog 2 (YCK2) from Saccharomyces cerevisiae (strain ATCC 204508 / S288c) (Baker's yeast).